The chain runs to 390 residues: Pyruvate dehydrogenase E1 component subunit alpha, somatic form, mitochondrial (390 aa).

A mitochondrion-targeting transit peptide spans 1-29; sequence MRKMLAAVSRVLSGASQKPASRVLVASRN. Residue K63 is modified to N6-acetyllysine; alternate. Residue K63 is modified to N6-succinyllysine; alternate. 11 residues coordinate pyruvate: H92, Y118, R119, A157, G165, V167, D196, G197, A198, N225, and Y227. Y118 and R119 together coordinate thiamine diphosphate. Residues G165, V167, D196, G197, A198, and N225 each coordinate thiamine diphosphate. A Mg(2+)-binding site is contributed by D196. 2 residues coordinate Mg(2+): N225 and Y227. S232 is modified (phosphoserine; by PDK1). K244 bears the N6-acetyllysine; alternate mark. Residue K244 is modified to N6-succinyllysine; alternate. The residue at position 277 (K277) is an N6-succinyllysine. A thiamine diphosphate-binding site is contributed by H292. S293 is subject to Phosphoserine; by PDK1, PDK2, PDK3 and PDK4. S295 bears the Phosphoserine mark. A Phosphoserine; by PDK1, PDK2, PDK3 and PDK4 modification is found at S300. The residue at position 301 (Y301) is a Phosphotyrosine. An N6-acetyllysine; alternate modification is found at K313. Position 313 is an N6-succinyllysine; alternate (K313). N6-acetyllysine occurs at positions 321 and 336. K385 is modified (N6-succinyllysine).

Heterotetramer of two PDHA1 and two PDHB subunits. The heterotetramer interacts with DLAT, and is part of the multimeric pyruvate dehydrogenase complex that contains multiple copies of pyruvate dehydrogenase (E1), dihydrolipoamide acetyltransferase (DLAT, E2) and lipoamide dehydrogenase (DLD, E3). These subunits are bound to an inner core composed of about 48 DLAT and 12 PDHX molecules. Thiamine diphosphate is required as a cofactor. Mg(2+) serves as cofactor. Post-translationally, phosphorylation at Ser-232, Ser-293 and Ser-300 by PDK family kinases inactivates the enzyme; for this phosphorylation at a single site is sufficient. Phosphorylation at Ser-293 interferes with access to active site, and thereby inactivates the enzyme. Dephosphorylation at all three sites, i.e. at Ser-232, Ser-293 and Ser-300, is required for reactivation. In terms of processing, acetylation alters the phosphorylation pattern. Deacetylated by SIRT3.

The protein localises to the mitochondrion matrix. It carries out the reaction N(6)-[(R)-lipoyl]-L-lysyl-[protein] + pyruvate + H(+) = N(6)-[(R)-S(8)-acetyldihydrolipoyl]-L-lysyl-[protein] + CO2. With respect to regulation, pyruvate dehydrogenase activity is inhibited by phosphorylation of PDHA1; it is reactivated by dephosphorylation. The pyruvate dehydrogenase complex catalyzes the overall conversion of pyruvate to acetyl-CoA and CO(2), and thereby links the glycolytic pathway to the tricarboxylic cycle. This Macaca fascicularis (Crab-eating macaque) protein is Pyruvate dehydrogenase E1 component subunit alpha, somatic form, mitochondrial (PDHA1).